The sequence spans 172 residues: Large ribosomal subunit protein uL10 (172 aa).

Belongs to the universal ribosomal protein uL10 family. Part of the ribosomal stalk of the 50S ribosomal subunit. The N-terminus interacts with L11 and the large rRNA to form the base of the stalk. The C-terminus forms an elongated spine to which L12 dimers bind in a sequential fashion forming a multimeric L10(L12)X complex.

Its function is as follows. Forms part of the ribosomal stalk, playing a central role in the interaction of the ribosome with GTP-bound translation factors. In Chlorobium limicola (strain DSM 245 / NBRC 103803 / 6330), this protein is Large ribosomal subunit protein uL10.